The chain runs to 263 residues: Endonuclease 8 (263 aa).

P2 acts as the Schiff-base intermediate with DNA in catalysis. E3 serves as the catalytic Proton donor. The active-site Proton donor; for beta-elimination activity is K53. The DNA site is built by Q70, R125, and N169. The segment at 229-263 adopts an FPG-type zinc-finger fold; the sequence is KVFHRDGEPCERCGGIIEKTTLSSRPFYWCPGCQH. The Proton donor; for delta-elimination activity role is filled by R253.

The protein belongs to the FPG family. Requires Zn(2+) as cofactor.

It carries out the reaction 2'-deoxyribonucleotide-(2'-deoxyribose 5'-phosphate)-2'-deoxyribonucleotide-DNA = a 3'-end 2'-deoxyribonucleotide-(2,3-dehydro-2,3-deoxyribose 5'-phosphate)-DNA + a 5'-end 5'-phospho-2'-deoxyribonucleoside-DNA + H(+). In terms of biological role, involved in base excision repair of DNA damaged by oxidation or by mutagenic agents. Acts as a DNA glycosylase that recognizes and removes damaged bases. Has a preference for oxidized pyrimidines, such as thymine glycol, 5,6-dihydrouracil and 5,6-dihydrothymine. Has AP (apurinic/apyrimidinic) lyase activity and introduces nicks in the DNA strand. Cleaves the DNA backbone by beta-delta elimination to generate a single-strand break at the site of the removed base with both 3'- and 5'-phosphates. The protein is Endonuclease 8 of Escherichia coli (strain UTI89 / UPEC).